Reading from the N-terminus, the 398-residue chain is LIM domain-binding protein 2 (398 aa).

Disordered stretches follow at residues 245-280 (PPAEPTRQTTTKRRKRKNSTNNASNSNAGNNATSAY) and 354-398 (DAAN…QASQ). The span at 263–279 (STNNASNSNAGNNATSA) shows a compositional bias: low complexity. Positions 323-362 (DVMVVGEPTLMGGEFGDEDERLITRLENTQYDAANGMDDE) constitute an LIM interaction domain (LID) domain.

Belongs to the LDB family. In terms of tissue distribution, expressed in adult brain, lung, spleen and kidney. Isoform b is generally expressed at a higher level than isoform a.

The protein localises to the nucleus. In terms of biological role, binds to the LIM domain of a wide variety of LIM domain-containing transcription factors. The chain is LIM domain-binding protein 2 from Xenopus laevis (African clawed frog).